The chain runs to 223 residues: Thymidylate kinase (223 aa).

Glycine 7–serine 14 contributes to the ATP binding site.

Belongs to the thymidylate kinase family.

It catalyses the reaction dTMP + ATP = dTDP + ADP. Its function is as follows. Phosphorylation of dTMP to form dTDP in both de novo and salvage pathways of dTTP synthesis. The polypeptide is Thymidylate kinase (Prosthecochloris aestuarii (strain DSM 271 / SK 413)).